A 309-amino-acid chain; its full sequence is Wnt inhibitor of Dorsal protein (309 aa).

A signal peptide spans 1–16 (MIFAITFFMGITSTLA). 10 disulfides stabilise this stretch: C51/C62, C102/C110, C112/C121, C162/C179, C164/C174, C232/C269, C248/C262, C266/C308, C284/C299, and C286/C296.

Belongs to the Wnt family.

It is found in the secreted. Its subcellular location is the extracellular space. The protein resides in the extracellular matrix. In terms of biological role, binds as a ligand to a family of frizzled seven-transmembrane receptors and acts through a cascade of genes on the nucleus. This chain is Wnt inhibitor of Dorsal protein (wntD), found in Drosophila melanogaster (Fruit fly).